We begin with the raw amino-acid sequence, 852 residues long: Transient receptor potential cation channel subfamily V member 4 (852 aa).

Residues 1-455 (MADPEDPRDA…RDKWRKFGAV (455 aa)) are Cytoplasmic-facing. Positions 30 to 51 (VEDTPSPAEPSRGPPGAVDGKQ) are disordered. ATP is bound by residues Lys178, Lys183, Asn187, 222–225 (YRGQ), and Arg234. 2 ANK repeats span residues 223-252 (RGQT…DVHA) and 270-299 (FGEL…KQAD). Residues 235–237 (RCK), 282–285 (NQPH), and Lys330 each bind a 1,2-diacyl-sn-glycero-3-phospho-(1D-myo-inositol-4,5-bisphosphate). One copy of the ANK 3 repeat lies at 355–387 (DGLSPLMMAAKTGKIGIFQHIIRREIADEDVRH). A helical membrane pass occupies residues 456–476 (SFYISVVSYLCAMIIFTLIAY). Residues 477–493 (YRPMEGPPPYPYTTTID) are Extracellular-facing. Residues 494–520 (YLRLAGEIITLLTGILFFFSNIKDLFM) form a helical membrane-spanning segment. Topologically, residues 521 to 533 (KKCPGVNSFFIDG) are cytoplasmic. The chain crosses the membrane as a helical span at residues 534–554 (SFQLLYFIYSVLVIVTAGLYL). Residues 555 to 558 (GGVE) are Extracellular-facing. A helical membrane pass occupies residues 559-579 (AYLAVMVFALVLGWMNALYFT). Residues 580-594 (RGLKLTGTYSIMIQK) are Cytoplasmic-facing. Residues 595–622 (ILFKDLFRFLLVYLLFMIGYASALVSLL) form a helical membrane-spanning segment. Topologically, residues 623 to 651 (NPCPSSESCSEDHSNCTLPTYPSCRDSQT) are extracellular. The pore-forming intramembrane region spans 652-671 (FSTFLLDLFKLTIGMGDLEM). Residues 665 to 668 (GMGD) carry the Selectivity filter motif. Residue Asp668 coordinates Ca(2+). Residues 672–679 (LESAKYPG) lie on the Extracellular side of the membrane. A helical membrane pass occupies residues 680 to 708 (VFIILLVTYIILTFVLLLNMLIALMGETV). The Cytoplasmic portion of the chain corresponds to 709-852 (GQVSKESKHI…RHGQTPSSPL (144 aa)).

The protein belongs to the transient receptor (TC 1.A.4) family. TrpV subfamily. TRPV4 sub-subfamily. As to quaternary structure, homotetramer. Interacts with Ca(2+)-calmodulin.

It localises to the apical cell membrane. It is found in the cell junction. Its subcellular location is the adherens junction. The enzyme catalyses Ca(2+)(in) = Ca(2+)(out). Its activity is regulated as follows. ATP binding enhances channel sensitivity to agonists. Ca(2+)-calmodulin prevents the ATP-mediated increased sensitivity to agonists. Non-selective calcium permeant cation channel involved in osmotic sensitivity and mechanosensitivity. Activation by exposure to hypotonicity within the physiological range exhibits an outward rectification. Also activated by phorbol esters. Channel activity seems to be regulated by a calmodulin-dependent mechanism. The sequence is that of Transient receptor potential cation channel subfamily V member 4 (TRPV4) from Gallus gallus (Chicken).